Consider the following 340-residue polypeptide: Dof zinc finger protein DOF2.2 (340 aa).

The interval 12–33 (PPINWPQSANPNNHPHHHQLQE) is disordered. The segment at 94–148 (LKCPRCDSANTKFCYFNNYNLTQPRHFCKACRRYWTRGGALRNVPVGGGCRRNKK) adopts a Dof-type zinc-finger fold. Zn(2+)-binding residues include Cys96, Cys99, Cys121, and Cys124. 2 disordered regions span residues 138 to 180 (PVGG…TSNV) and 301 to 340 (GNISRPVSGLTSPGNQSNQYWTGQGLPGSSSNDHHHQHLM). Residues 151-165 (SGNSKSSSSSQNKQS) show a composition bias toward low complexity. Polar residues-rich tracts occupy residues 166–180 (TSMVNATSPTNTSNV) and 309–331 (GLTSPGNQSNQYWTGQGLPGSSS).

It localises to the nucleus. Transcription factor that binds specifically to a 5'-AA[AG]G-3' consensus core sequence. In Arabidopsis thaliana (Mouse-ear cress), this protein is Dof zinc finger protein DOF2.2 (DOF2.2).